The chain runs to 454 residues: Chromosomal replication initiator protein DnaA (454 aa).

The domain I, interacts with DnaA modulators stretch occupies residues methionine 1 to isoleucine 74. Positions isoleucine 74–leucine 116 are domain II. A disordered region spans residues proline 88–phenylalanine 112. Residues lysine 101–phenylalanine 112 show a composition bias toward basic and acidic residues. A domain III, AAA+ region region spans residues arginine 117 to alanine 333. 4 residues coordinate ATP: glycine 161, glycine 163, lysine 164, and threonine 165. A domain IV, binds dsDNA region spans residues threonine 334–arginine 454.

Belongs to the DnaA family. In terms of assembly, oligomerizes as a right-handed, spiral filament on DNA at oriC.

Its subcellular location is the cytoplasm. Functionally, plays an essential role in the initiation and regulation of chromosomal replication. ATP-DnaA binds to the origin of replication (oriC) to initiate formation of the DNA replication initiation complex once per cell cycle. Binds the DnaA box (a 9 base pair repeat at the origin) and separates the double-stranded (ds)DNA. Forms a right-handed helical filament on oriC DNA; dsDNA binds to the exterior of the filament while single-stranded (ss)DNA is stabiized in the filament's interior. The ATP-DnaA-oriC complex binds and stabilizes one strand of the AT-rich DNA unwinding element (DUE), permitting loading of DNA polymerase. After initiation quickly degrades to an ADP-DnaA complex that is not apt for DNA replication. Binds acidic phospholipids. The chain is Chromosomal replication initiator protein DnaA from Lactobacillus delbrueckii subsp. bulgaricus (strain ATCC 11842 / DSM 20081 / BCRC 10696 / JCM 1002 / NBRC 13953 / NCIMB 11778 / NCTC 12712 / WDCM 00102 / Lb 14).